We begin with the raw amino-acid sequence, 519 residues long: Ribonuclease Y (519 aa).

The helical transmembrane segment at 3–23 threads the bilayer; the sequence is LMIFAYIAIGAVLGAGTGYLL. In terms of domain architecture, KH spans 209-272; that stretch reads TVTAVTLPSE…QVAKMALERL (64 aa). The HD domain occupies 335–428; the sequence is VLQHSLEVSA…VQAADSISGA (94 aa).

Belongs to the RNase Y family.

The protein resides in the cell membrane. Functionally, endoribonuclease that initiates mRNA decay. The sequence is that of Ribonuclease Y from Nitratidesulfovibrio vulgaris (strain ATCC 29579 / DSM 644 / CCUG 34227 / NCIMB 8303 / VKM B-1760 / Hildenborough) (Desulfovibrio vulgaris).